Consider the following 93-residue polypeptide: Large ribosomal subunit protein uL23c (93 aa).

This sequence belongs to the universal ribosomal protein uL23 family. In terms of assembly, part of the 50S ribosomal subunit.

Its subcellular location is the plastid. The protein resides in the chloroplast. Functionally, binds to 23S rRNA. The protein is Large ribosomal subunit protein uL23c (rpl23) of Adiantum capillus-veneris (Maidenhair fern).